The primary structure comprises 262 residues: Expansin-A13 (262 aa).

The N-terminal stretch at 1-22 (MAGVARMLAAVVCAIMPAAAMA) is a signal peptide. The region spanning 52-167 (GGACGYGNLY…QRVPCMKKGG (116 aa)) is the Expansin-like EG45 domain. The region spanning 177–257 (YFQLVLLTNV…GWRFGQTFAS (81 aa)) is the Expansin-like CBD domain.

This sequence belongs to the expansin family. Expansin A subfamily. In terms of tissue distribution, expressed in roots and flowers.

It localises to the secreted. The protein resides in the cell wall. Its subcellular location is the membrane. Functionally, may cause loosening and extension of plant cell walls by disrupting non-covalent bonding between cellulose microfibrils and matrix glucans. No enzymatic activity has been found. May be required for rapid internodal elongation in deepwater rice during submergence. In Oryza sativa subsp. japonica (Rice), this protein is Expansin-A13 (EXPA13).